The primary structure comprises 81 residues: Cell division protein ZapB (81 aa).

A coiled-coil region spans residues 5-81; sequence LEVFEKLEAK…QALLGRMEEV (77 aa). Lys10 is subject to N6-acetyllysine. The interval 36–67 is disordered; that stretch reads NNSLSQEVQNAQHQREELERENNHLKEQQNGW. Over residues 37–47 the composition is skewed to polar residues; that stretch reads NSLSQEVQNAQ. Residues 48–62 are compositionally biased toward basic and acidic residues; it reads HQREELERENNHLKE.

It belongs to the ZapB family. As to quaternary structure, homodimer. The ends of the coiled-coil dimer bind to each other, forming polymers. Interacts with FtsZ.

It is found in the cytoplasm. Its function is as follows. Non-essential, abundant cell division factor that is required for proper Z-ring formation. It is recruited early to the divisome by direct interaction with FtsZ, stimulating Z-ring assembly and thereby promoting cell division earlier in the cell cycle. Its recruitment to the Z-ring requires functional FtsA or ZipA. In Shigella boydii serotype 4 (strain Sb227), this protein is Cell division protein ZapB.